We begin with the raw amino-acid sequence, 751 residues long: Glutamate carboxypeptidase 2 (751 aa).

Residues 1–19 lie on the Cytoplasmic side of the membrane; the sequence is MWNPLHETDSTSVAWRRPR. At Ser10 the chain carries Phosphoserine. The chain crosses the membrane as a helical; Signal-anchor for type II membrane protein span at residues 20-43; sequence WLCAGALVLAAGLFVLGFLFGWFI. Topologically, residues 44 to 750 are extracellular; sequence KSPNEAANIS…QAAAGTLREV (707 aa). Asn51, Asn77, Asn122, Asn141, Asn154, and Asn196 each carry an N-linked (GlcNAc...) asparagine glycan. Residues Arg211 and Asn258 each coordinate substrate. Ca(2+)-binding residues include Thr270 and Tyr273. Positions 275–588 are NAALADase; that stretch reads ANEYAYRLQI…QVRGGIVFEL (314 aa). A glycan (N-linked (GlcNAc...) asparagine) is linked at Asn337. Zn(2+) contacts are provided by His378 and Asp388. Glu425 contributes to the substrate binding site. Residue Glu425 is the Nucleophile; for NAALADase activity of the active site. Glu426 contributes to the Zn(2+) binding site. Glu434 and Glu437 together coordinate Ca(2+). Asp454 contacts Zn(2+). 2 N-linked (GlcNAc...) asparagine glycosylation sites follow: Asn460 and Asn477. Residues 518–519, Asn520, 535–537, Tyr553, and 553–554 contribute to the substrate site; these read SG, RAR, and YH. His554 contributes to the Zn(2+) binding site. N-linked (GlcNAc...) asparagine glycosylation is present at Asn614. Residue Ser629 is the Charge relay system of the active site. N-linked (GlcNAc...) asparagine glycosylation is found at Asn639 and Asn646. Residues Asp667 and His690 each act as charge relay system in the active site. 700–701 provides a ligand contact to substrate; sequence KY.

This sequence belongs to the peptidase M28 family. M28B subfamily. In terms of assembly, homodimer. It depends on Zn(2+) as a cofactor. In terms of tissue distribution, high expression in the duodenum and in the jejunum brush-border membrane. Weak expression in kidney.

The protein localises to the cell membrane. It catalyses the reaction Release of an unsubstituted, C-terminal glutamyl residue, typically from Ac-Asp-Glu or folylpoly-gamma-glutamates.. The NAALADase activity is inhibited by quisqualic acid, beta-NAAG and 2-(phosphonomethyl) pentanedioic acid (PMPA). Ethanol ingestion decreases the folate hydrolase activity by 50%. Has both folate hydrolase and N-acetylated-alpha-linked-acidic dipeptidase (NAALADase) activity. Has a preference for tri-alpha-glutamate peptides. In the intestine, required for the uptake of folate. In the brain, modulates excitatory neurotransmission through the hydrolysis of the neuropeptide, N-aceylaspartylglutamate (NAAG), thereby releasing glutamate. Functionally, also exhibits a dipeptidyl-peptidase IV type activity. In vitro, cleaves Gly-Pro-AMC. The chain is Glutamate carboxypeptidase 2 (FOLH1) from Sus scrofa (Pig).